Reading from the N-terminus, the 269-residue chain is GATA zinc finger domain-containing protein 1 (269 aa).

The GATA-type zinc-finger motif lies at 9–33 (CSVCKTTSSSMWKKGAQGEILCHHC). The tract at residues 63–115 (ATFASTSATPPQSNGGGGGKQSKQEIHRRSARLRNTKYKSAPAAEKKVSTKGK) is disordered. Lys262 participates in a covalent cross-link: Glycyl lysine isopeptide (Lys-Gly) (interchain with G-Cter in SUMO2).

In terms of assembly, component of a chromatin complex, at least composed of KDM5A, GATAD1 and EMSY. As to expression, ubiquitously expressed among various tissue types. Expressed in left ventricular myocytes.

It localises to the nucleus. In terms of biological role, component of some chromatin complex recruited to chromatin sites methylated 'Lys-4' of histone H3 (H3K4me), with a preference for trimethylated form (H3K4me3). In Homo sapiens (Human), this protein is GATA zinc finger domain-containing protein 1 (GATAD1).